Consider the following 628-residue polypeptide: Basal cell adhesion molecule (628 aa).

A signal peptide spans 1 to 31 (MEPPDARAGARRAPRLLVLALLLAAPPGSKA). Ig-like V-type domains lie at 32 to 142 (EVRL…ARLK) and 150 to 253 (PEVS…RLDG). Residues 32–547 (EVRLSVPPLV…GTVAPQTSQA (516 aa)) lie on the Extracellular side of the membrane. Cystine bridges form between Cys-53–Cys-125, Cys-172–Cys-237, and Cys-291–Cys-337. 3 consecutive Ig-like C2-type domains span residues 254-355 (PSFS…KTLE), 355-441 (ELRV…RSFR), and 448-538 (PELK…FHFG). 3 N-linked (GlcNAc...) asparagine glycosylation sites follow: Asn-321, Asn-330, and Asn-378. 2 cysteine pairs are disulfide-bonded: Cys-384/Cys-424 and Cys-473/Cys-522. The helical transmembrane segment at 548–568 (GVAVMAVAISVALLLLVVAVF) threads the bilayer. Topologically, residues 569 to 628 (YCMRRKGRPGCCQWGEKGSPPPGEPKLSHSGSQRPEQTGLLMGSASGGAKHGSGGFGDEC) are cytoplasmic. The disordered stretch occupies residues 580–628 (CQWGEKGSPPPGEPKLSHSGSQRPEQTGLLMGSASGGAKHGSGGFGDEC). Phosphoserine is present on residues Ser-596, Ser-598, Ser-600, and Ser-621. A compositionally biased stretch (gly residues) spans 613-628 (ASGGAKHGSGGFGDEC).

In terms of assembly, homodimer. Interacts with ITGA4:ITGB1. Interacts with spectrins SPTA1 and SPTB1. Epinephrine-stimulated phosphorylation of Ser-621 by PKA enhances adhesion to laminin. Ser-621 can also be phosphorylated by AKT1.

It localises to the cell membrane. Functionally, transmembrane glycoprotein that functions as both a receptor and an adhesion molecule playing a crucial role in cell adhesion, motility, migration and invasion. Extracellular domain enables binding to extracellular matrix proteins, such as laminin, integrin and other ligands while its intracellular domain interacts with cytoskeletal proteins like hemoglobin, facilitating cell signal transduction. Serves as a receptor for laminin alpha-5/LAMA5 to promote cell adhesion. Mechanistically, JAK2 induces BCAM phosphorylation and activates its adhesion to laminin by stimulating a Rap1/AKT signaling pathway in the absence of EPOR. The sequence is that of Basal cell adhesion molecule (BCAM) from Bos taurus (Bovine).